The primary structure comprises 247 residues: UDP-2,3-diacylglucosamine hydrolase (247 aa).

Positions 8, 10, 41, 79, and 114 each coordinate Mn(2+). A substrate-binding site is contributed by 79–80 (NR). The substrate site is built by aspartate 122, serine 160, aspartate 171, glutamine 174, and histidine 202. The Mn(2+) site is built by histidine 202 and histidine 204.

It belongs to the LpxH family. Mn(2+) serves as cofactor.

The protein localises to the cell inner membrane. It catalyses the reaction UDP-2-N,3-O-bis[(3R)-3-hydroxytetradecanoyl]-alpha-D-glucosamine + H2O = 2-N,3-O-bis[(3R)-3-hydroxytetradecanoyl]-alpha-D-glucosaminyl 1-phosphate + UMP + 2 H(+). Its pathway is glycolipid biosynthesis; lipid IV(A) biosynthesis; lipid IV(A) from (3R)-3-hydroxytetradecanoyl-[acyl-carrier-protein] and UDP-N-acetyl-alpha-D-glucosamine: step 4/6. Hydrolyzes the pyrophosphate bond of UDP-2,3-diacylglucosamine to yield 2,3-diacylglucosamine 1-phosphate (lipid X) and UMP by catalyzing the attack of water at the alpha-P atom. Involved in the biosynthesis of lipid A, a phosphorylated glycolipid that anchors the lipopolysaccharide to the outer membrane of the cell. The protein is UDP-2,3-diacylglucosamine hydrolase of Xanthomonas campestris pv. campestris (strain B100).